We begin with the raw amino-acid sequence, 327 residues long: Urokinase plasminogen activator surface receptor (327 aa).

Residues 1–23 form the signal peptide; the sequence is MGLPRRLLLLLLLATTCVPASQG. UPAR/Ly6 domains lie at 24-117, 117-212, and 213-298; these read LQCM…GRYL, LECA…PPNG, and FQCY…SPTG. 3 disulfide bridges follow: Cys26–Cys47, Cys29–Cys35, and Cys40–Cys68. The N-linked (GlcNAc...) asparagine glycan is linked to Asn32. N-linked (GlcNAc...) asparagine glycosylation is present at Asn75. 11 disulfides stabilise this stretch: Cys94/Cys99, Cys119/Cys146, Cys122/Cys129, Cys139/Cys168, Cys174/Cys191, Cys192/Cys197, Cys215/Cys243, Cys218/Cys226, Cys236/Cys262, Cys268/Cys287, and Cys288/Cys293. N-linked (GlcNAc...) asparagine glycans are attached at residues Asn183, Asn193, Asn221, Asn254, and Asn282. A lipid anchor (GPI-anchor amidated glycine) is attached at Gly298. The propeptide at 299 to 327 is removed in mature form; it reads GAPRPGPAQLSLIASLLLTLGLWGVLLWT.

In terms of assembly, monomer. Interacts (via the UPAR/Ly6 domains) with SRPX2. Interacts with MRC2. Interacts with SORL1 (via N-terminal ectodomain); this interaction decreases PLAUR internalization. The ternary complex composed of PLAUR-PLAU-SERPINE1 also interacts with SORL1. Interacts with CD82; this interaction prevents PLAUR from binding to its high affinity ligand PLAU. Expressed in angiogenic endothelial cells (at protein level).

It is found in the cell membrane. The protein localises to the secreted. In terms of biological role, acts as a receptor for urokinase plasminogen activator. Plays a role in localizing and promoting plasmin formation. Mediates the proteolysis-independent signal transduction activation effects of U-PA. The polypeptide is Urokinase plasminogen activator surface receptor (Plaur) (Mus musculus (Mouse)).